An 86-amino-acid chain; its full sequence is Weak neurotoxin 6 (86 aa).

The N-terminal stretch at 1-21 (MKTLLLTLVVVTIVCLDLGYT) is a signal peptide. Intrachain disulfides connect Cys24–Cys45, Cys27–Cys32, Cys38–Cys63, Cys67–Cys78, and Cys79–Cys84.

Belongs to the three-finger toxin family. Ancestral subfamily. Orphan group II sub-subfamily. In terms of tissue distribution, expressed by the venom gland.

It localises to the secreted. In terms of biological role, binds with low affinity to muscular (alpha-1-beta-1-delta-epsilon/CHRNA1-CHRNB1-CHRND-CHRNE) and very low affinity to neuronal (alpha-7/CHRNA7) nicotinic acetylcholine receptor (nAChR). This Naja sputatrix (Malayan spitting cobra) protein is Weak neurotoxin 6.